We begin with the raw amino-acid sequence, 239 residues long: Pyridoxal 5'-phosphate synthase subunit PdxS (239 aa).

D21 provides a ligand contact to D-ribose 5-phosphate. Catalysis depends on K78, which acts as the Schiff-base intermediate with D-ribose 5-phosphate. G150 contacts D-ribose 5-phosphate. R162 provides a ligand contact to D-glyceraldehyde 3-phosphate. Residues G211 and 232-233 (GS) each bind D-ribose 5-phosphate.

It belongs to the PdxS/SNZ family. In the presence of PdxT, forms a dodecamer of heterodimers.

It carries out the reaction aldehydo-D-ribose 5-phosphate + D-glyceraldehyde 3-phosphate + L-glutamine = pyridoxal 5'-phosphate + L-glutamate + phosphate + 3 H2O + H(+). Its pathway is cofactor biosynthesis; pyridoxal 5'-phosphate biosynthesis. In terms of biological role, catalyzes the formation of pyridoxal 5'-phosphate from ribose 5-phosphate (RBP), glyceraldehyde 3-phosphate (G3P) and ammonia. The ammonia is provided by the PdxT subunit. Can also use ribulose 5-phosphate and dihydroxyacetone phosphate as substrates, resulting from enzyme-catalyzed isomerization of RBP and G3P, respectively. In Francisella tularensis, this protein is Pyridoxal 5'-phosphate synthase subunit PdxS.